Here is a 227-residue protein sequence, read N- to C-terminus: H-N-H endonuclease F-TflIV (227 aa).

Functionally, endonuclease that introduces double-strand break into pseudo palindromic 17 bp DNA sequence yielding 1 bp extensions with 3'-overhangs. This is H-N-H endonuclease F-TflIV from Escherichia phage T5 (Enterobacteria phage T5).